The chain runs to 227 residues: Putative ankyrin repeat protein RF_0314 (227 aa).

ANK repeat units lie at residues 94–126 (NGCT…DPNI), 130–164 (DGNT…DIEL), and 168–199 (LGWT…DNDF).

This Rickettsia felis (strain ATCC VR-1525 / URRWXCal2) (Rickettsia azadi) protein is Putative ankyrin repeat protein RF_0314.